A 130-amino-acid chain; its full sequence is Small ribosomal subunit protein uS8 (130 aa).

The protein belongs to the universal ribosomal protein uS8 family. Part of the 30S ribosomal subunit. Contacts proteins S5 and S12.

Its function is as follows. One of the primary rRNA binding proteins, it binds directly to 16S rRNA central domain where it helps coordinate assembly of the platform of the 30S subunit. This is Small ribosomal subunit protein uS8 from Cronobacter sakazakii (strain ATCC BAA-894) (Enterobacter sakazakii).